The sequence spans 103 residues: Large ribosomal subunit protein bL21 (103 aa).

This sequence belongs to the bacterial ribosomal protein bL21 family. Part of the 50S ribosomal subunit. Contacts protein L20.

Functionally, this protein binds to 23S rRNA in the presence of protein L20. The protein is Large ribosomal subunit protein bL21 of Mycolicibacterium paratuberculosis (strain ATCC BAA-968 / K-10) (Mycobacterium paratuberculosis).